A 138-amino-acid chain; its full sequence is DASH complex subunit DAD2 (138 aa).

The segment covering 1 to 14 has biased composition (polar residues); it reads MSGFSSRPLSTHLR. Disordered regions lie at residues 1–25 and 116–138; these read MSGF…QGQS and PTEH…SGRG.

This sequence belongs to the DASH complex DAD2 family. Component of the DASH complex consisting of ASK1, DAD1, DAD2, DAD3, DAD4, DAM1, DUO1, HSK3, SPC19 and SPC34, with a stoichiometry of one copy of each subunit per complex. Multiple DASH complexes oligomerize to form a ring that encircles spindle microtubules and organizes the rod-like NDC80 complexes of the outer kinetochore. DASH complex oligomerization strengthens microtubule attachments. On cytoplasmic microtubules, DASH complexes appear to form patches instead of rings.

The protein localises to the chromosome. It localises to the centromere. It is found in the kinetochore. The protein resides in the cytoplasm. Its subcellular location is the cytoskeleton. The protein localises to the spindle. It localises to the nucleus. Its function is as follows. Component of the DASH complex that connects microtubules with kinetochores and couples microtubule depolymerisation to chromosome movement; it is involved in retrieving kinetochores to the spindle poles before their re-orientation on the spindle in early mitosis and allows microtubule depolymerization to pull chromosomes apart and resist detachment during anaphase. Kinetochores, consisting of a centromere-associated inner segment and a microtubule-contacting outer segment, play a crucial role in chromosome segregation by mediating the physical connection between centromeric DNA and microtubules. Kinetochores also serve as an input point for the spindle assembly checkpoint, which delays anaphase until all chromosomes have bioriented on the mitotic spindle. The sequence is that of DASH complex subunit DAD2 from Chaetomium thermophilum (strain DSM 1495 / CBS 144.50 / IMI 039719) (Thermochaetoides thermophila).